Reading from the N-terminus, the 293-residue chain is Glycine N-methyltransferase (293 aa).

Val2 bears the N-acetylvaline mark. Residues Ser4 and Tyr6 each coordinate (6S)-5-methyl-5,6,7,8-tetrahydrofolate. Residue Ser10 is modified to Phosphoserine. Residues Tyr22, Trp31, Tyr34, and Arg41 each coordinate S-adenosyl-L-methionine. The residue at position 34 (Tyr34) is a Phosphotyrosine. Residue Lys46 is modified to N6-succinyllysine. S-adenosyl-L-methionine is bound by residues Ala65, 86–88 (DAS), 117–118 (NW), 137–140 (LGNS), and Arg176. Lys191, Lys196, and Lys201 each carry N6-succinyllysine. His215 contributes to the (6S)-5-methyl-5,6,7,8-tetrahydrofolate binding site. Tyr221 contacts S-adenosyl-L-methionine. Position 240 (Arg240) interacts with (6S)-5-methyl-5,6,7,8-tetrahydrofolate.

This sequence belongs to the class I-like SAM-binding methyltransferase superfamily. Glycine N-methyltransferase family. Homotetramer. In terms of tissue distribution, abundant in liver.

The protein resides in the cytoplasm. It carries out the reaction glycine + S-adenosyl-L-methionine = sarcosine + S-adenosyl-L-homocysteine + H(+). Its activity is regulated as follows. Inhibited by 5-methyltetrahydrofolate monoglutamate and by 5-methyltetrahydrofolate pentaglutamate, inhibition is much more effective by the pentaglutamate form than by the monoglutamate form. Two molecules of 5-methyltetrahydrofolate are bound per tetramer. The binding sites are localized between subunits. Inhibitor binding may preclude movements of the polypeptide chain that are necessary for enzyme activity. Functionally, catalyzes the methylation of glycine by using S-adenosylmethionine (AdoMet) to form N-methylglycine (sarcosine) with the concomitant production of S-adenosylhomocysteine (AdoHcy), a reaction regulated by the binding of 5-methyltetrahydrofolate. Possible crucial role in the regulation of tissue concentration of AdoMet and of metabolism of methionine. This Rattus norvegicus (Rat) protein is Glycine N-methyltransferase (Gnmt).